The chain runs to 655 residues: MASVIALSLLLPAAFAADHSPLRARLQDGLARTPQMGWNTYNHYNCYPDEEIFRSNAKALVDFGLADLGYRYATIDCGWTLTERLANGSLTWNATRFPSGFPAIADYLHDLGLLFGVYGDAGIKLCGPSDEHEEQDAQTFAAWGADSLKYDNCFSEASLGYPNVEYAPSSPLKPRYEVMSNALQKLDRPILFQICEWGIDFPALWAPALGHSWRIGNDIIPAWRSVFRTLNQAVPQTDFAGPGQWPDLDMLMVGNGVYSVPEEETHFSLWAILKSPLIIGSALKDATTEINSESLRILKQKAVIGYNQDKLGVSASLRRRWTDQGYEVWSGPLSNGRTVAAVINWRGEARDLTLDLPDIGLQSAGLVKNIWAGSTSRNVQTSYTARVEGHGTMLLELRDTVPAGVYPKKIFGSSRGQGTVFKSVYAGSTSENYTLAINFAKTIPSASKITVQVGANRQKLSIAVPPSRQQVTATIPLVAGSNNTITISHSHPITAIQVTSPNGTYYPATQFSLTGAARHETCGEGFCQPVGSKVSYLSPNSTARGVIPASAGTKYVEIDYINNEVAFSSSWGWGANSRNLTISLNGGEPVRLEVPLSGRHSELFGPGKGWWDTATLGVSVDGWKEGDNEVVVGNVNGEKGFQPYAADFVGLRVFD.

The first 16 residues, Met-1–Ala-16, serve as a signal peptide directing secretion. Asn-87 and Asn-93 each carry an N-linked (GlcNAc...) asparagine glycan. A disulfide bond links Cys-126 and Cys-153. Catalysis depends on Asp-151, which acts as the Nucleophile. Glu-196–Asp-200 provides a ligand contact to substrate. Asp-218 (proton donor) is an active-site residue. Asn-432, Asn-482, Asn-502, Asn-540, and Asn-579 each carry an N-linked (GlcNAc...) asparagine glycan.

The protein belongs to the glycosyl hydrolase 27 family.

It localises to the secreted. It carries out the reaction Hydrolysis of terminal, non-reducing alpha-D-galactose residues in alpha-D-galactosides, including galactose oligosaccharides, galactomannans and galactolipids.. Its function is as follows. Hydrolyzes a variety of simple alpha-D-galactoside as well as more complex molecules such as oligosaccharides and polysaccharides. The chain is Probable alpha-galactosidase D (aglD) from Aspergillus terreus (strain NIH 2624 / FGSC A1156).